Reading from the N-terminus, the 644-residue chain is Sodium/hydrogen exchanger 9 (644 aa).

The Lumenal portion of the chain corresponds to M1–G20. Residues A21 to F41 traverse the membrane as a helical segment. Residues K42 to R45 are Cytoplasmic-facing. Residues F46 to L66 traverse the membrane as a helical segment. Residues R67 to K126 are Lumenal-facing. Residues M127–G147 form a helical membrane-spanning segment. Over Y148–T164 the chain is Cytoplasmic. Residues Y165–V185 traverse the membrane as a helical segment. The Lumenal segment spans residues K186–D203. The helical transmembrane segment at C204–H224 threads the bilayer. Residues E225–L235 are Cytoplasmic-facing. A helical membrane pass occupies residues L236–I256. At Y257 to N277 the chain is on the lumenal side. Residues F278–L298 form a helical membrane-spanning segment. The Cytoplasmic portion of the chain corresponds to L299–P309. Residues M310–A327 form a helical membrane-spanning segment. The Lumenal segment spans residues E328–T333. The helical transmembrane segment at G334 to Y350 threads the bilayer. The Cytoplasmic portion of the chain corresponds to N351–L364. Residues F365 to F385 traverse the membrane as a helical segment. T386 is a topological domain (lumenal). A helical transmembrane segment spans residues F387 to A407. The Cytoplasmic segment spans residues R408–W429. Residues N430 to I450 traverse the membrane as a helical segment. Residues R451–T465 lie on the Lumenal side of the membrane. A helical membrane pass occupies residues L466–W486. Residues L487–D644 lie on the Cytoplasmic side of the membrane. Residues Y590 to D644 form a disordered region.

This sequence belongs to the monovalent cation:proton antiporter 1 (CPA1) transporter (TC 2.A.36) family. As to quaternary structure, homodimer; phosphatidylinositol-4,5-bisphosphate (PIP2) and phosphatidylinositol 3,4,5-trisphosphate (PIP3) could be involved in the dimer stabilization. Interacts (via the C-terminus) with RACK1. Interacts with CHP1. As to expression, expressed in the brain. Highly expressed in immune cells, specifically macrophages.

The protein resides in the late endosome membrane. It localises to the cell membrane. The protein localises to the early endosome membrane. Its subcellular location is the recycling endosome membrane. It is found in the cytoplasmic vesicle. The protein resides in the phagosome membrane. The enzyme catalyses Na(+)(in) + H(+)(out) = Na(+)(out) + H(+)(in). The catalysed reaction is K(+)(in) + H(+)(out) = K(+)(out) + H(+)(in). Endosomal Na(+), K(+)/H(+) antiporter. Mediates the electroneutral exchange of endosomal luminal H(+) for a cytosolic Na(+) or K(+). By facilitating proton efflux, SLC9A9 counteracts the acidity generated by vacuolar (V)-ATPase, thereby limiting luminal acidification. Regulates organellar pH and consequently, endosome maturation and endocytic trafficking of plasma membrane receptors and neurotransporters. Promotes the recycling of transferrin receptors back to the cell surface to facilitate additional iron uptake in the brain. Regulates synaptic transmission by regulating the luminal pH of axonal endosomes. Regulates phagosome lumenal pH, thus affecting phagosome maturation, and consequently, microbicidal activity in macrophages. Can also be active at the cell surface of specialized cells, e.g., in the inner ear hair bundles uses the high K(+) of the endolymph to regulate intracelular pH. The protein is Sodium/hydrogen exchanger 9 (Slc9a9) of Mus musculus (Mouse).